The primary structure comprises 157 residues: MFGTSVSALCLLFLLSVCTACYISNCPIGGKRSALAFPSRKCMSCGPGDRGRCFGPNICCGEGMGCYVGSPEAAGCVEENYLPSPCEVGGRVCGSEEGRCAAPGICCDVEGCSIDQSCTEEDEAEYISQSVSSSHGHDLLMKLLNMISHTPPHRVHK.

Residues 1-20 (MFGTSVSALCLLFLLSVCTA) form the signal peptide. An intrachain disulfide couples Cys-21 to Cys-26. Residue Gly-29 is modified to Glycine amide. Cystine bridges form between Cys-42–Cys-86, Cys-45–Cys-59, Cys-53–Cys-76, Cys-60–Cys-66, Cys-93–Cys-106, Cys-100–Cys-118, and Cys-107–Cys-112.

This sequence belongs to the vasopressin/oxytocin family. Seven disulfide bonds are present in neurophysin.

The protein resides in the secreted. Its function is as follows. Isotocin causes contraction of smooth muscles. The chain is Isotocin-neurophysin IT 1 from Oncorhynchus masou (Cherry salmon).